The following is a 305-amino-acid chain: MTDHIAAVKTYLLDLQDRICAALEAEDGKARFAEDAWERPAGGGGRTRVIGDGALIEKGGVNFSHVFGDSLPPSASAHRPELAGRGFQALGVSLVIHPENPHVPTSHANVRFFCAEKEGEEPVWWFGGGFDLTPYYAHEEDCVHWHRVARDACAPFGADVYPRYKEWCDRYFHLKHRNEPRGIGGLFFDDLNQWDFDTCFAFIRAIGDAYIDAYLPIVQRRKHTPFDERQREFQAYRRGRYVEFNLVFDRGTLFGLQSGGRTESILMSLPPQVRWGYDWKPEPGSEEARLTEYFLADRDWLAGQP.

Ser-93 is a substrate binding site. A divalent metal cation-binding residues include His-97 and His-107. Residue His-107 is the Proton donor of the active site. 109 to 111 (NVR) provides a ligand contact to substrate. A divalent metal cation-binding residues include His-146 and His-176. The important for dimerization stretch occupies residues 241-276 (YVEFNLVFDRGTLFGLQSGGRTESILMSLPPQVRWG). A substrate-binding site is contributed by 259–261 (GGR).

Belongs to the aerobic coproporphyrinogen-III oxidase family. As to quaternary structure, homodimer. The cofactor is a divalent metal cation.

It localises to the cytoplasm. It catalyses the reaction coproporphyrinogen III + O2 + 2 H(+) = protoporphyrinogen IX + 2 CO2 + 2 H2O. Its pathway is porphyrin-containing compound metabolism; protoporphyrin-IX biosynthesis; protoporphyrinogen-IX from coproporphyrinogen-III (O2 route): step 1/1. Its function is as follows. Involved in the heme biosynthesis. Catalyzes the aerobic oxidative decarboxylation of propionate groups of rings A and B of coproporphyrinogen-III to yield the vinyl groups in protoporphyrinogen-IX. This chain is Oxygen-dependent coproporphyrinogen-III oxidase, found in Pseudomonas aeruginosa (strain LESB58).